The primary structure comprises 1036 residues: Exportin-T (1036 aa).

This sequence belongs to the exportin family.

The protein localises to the nucleus. It is found in the cytoplasm. In terms of biological role, tRNA nucleus export receptor which facilitates tRNA translocation across the nuclear pore complex. Involved in pre-tRNA splicing, probably by affecting the interaction of pre-tRNA with splicing endonuclease. This Phaeosphaeria nodorum (strain SN15 / ATCC MYA-4574 / FGSC 10173) (Glume blotch fungus) protein is Exportin-T (LOS1).